Reading from the N-terminus, the 971-residue chain is Reversion-inducing cysteine-rich protein with Kazal motifs (971 aa).

Residues methionine 1–alanine 22 form the signal peptide. Residues cysteine 37–cysteine 84 form a Knot 1 repeat. The segment at cysteine 37–cysteine 338 is 5 X Knot repeats. N-linked (GlcNAc...) asparagine glycosylation is found at asparagine 39 and asparagine 86. 2 Knot repeats span residues cysteine 104–cysteine 141 and cysteine 151–cysteine 197. Residue asparagine 200 is glycosylated (N-linked (GlcNAc...) asparagine). Knot repeat units lie at residues cysteine 216–cysteine 263 and cysteine 292–cysteine 338. Asparagine 297 and asparagine 352 each carry an N-linked (GlcNAc...) asparagine glycan. Kazal-like domains are found at residues threonine 627–serine 673, threonine 698–proline 752, and phenylalanine 753–alanine 789. Cystine bridges form between cysteine 633-cysteine 658, cysteine 635-cysteine 654, cysteine 643-cysteine 671, cysteine 716-cysteine 735, cysteine 724-cysteine 750, and cysteine 761-cysteine 787. A Kazal-like 2; degenerate domain is found at cysteine 704–cysteine 750. Serine 942 carries GPI-anchor amidated serine lipidation. Residues serine 943–proline 971 constitute a propeptide, removed in mature form.

This sequence belongs to the RECK family. Interacts (via knot repeats) with WNT7A (via disordered linker region); the interaction is direct. Interacts (via knot repeats) with WNT7B (via disordered linker region); the interaction is direct. Interacts with ADGRA2; the interaction is direct. Interacts with MMP9.

It is found in the cell membrane. Functions together with ADGRA2 to enable brain endothelial cells to selectively respond to Wnt7 signals (WNT7A or WNT7B). Plays a key role in Wnt7-specific responses: required for central nervous system (CNS) angiogenesis and blood-brain barrier regulation. Acts as a Wnt7-specific coactivator of canonical Wnt signaling by decoding Wnt ligands: acts by interacting specifically with the disordered linker region of Wnt7, thereby conferring ligand selectivity for Wnt7. ADGRA2 is then required to deliver RECK-bound Wnt7 to frizzled by assembling a higher-order RECK-ADGRA2-Fzd-LRP5-LRP6 complex. Also acts as a serine protease inhibitor: negatively regulates matrix metalloproteinase-9 (MMP9) by suppressing MMP9 secretion and by direct inhibition of its enzymatic activity. Also inhibits metalloproteinase activity of MMP2 and MMP14 (MT1-MMP). The protein is Reversion-inducing cysteine-rich protein with Kazal motifs of Mus musculus (Mouse).